A 282-amino-acid chain; its full sequence is Pantothenate synthetase (282 aa).

An ATP-binding site is contributed by 26 to 33 (MGNLHEGH). Catalysis depends on histidine 33, which acts as the Proton donor. Position 57 (glutamine 57) interacts with (R)-pantoate. Residue glutamine 57 participates in beta-alanine binding. 144-147 (GKKD) serves as a coordination point for ATP. Residue glutamine 150 coordinates (R)-pantoate. Residues isoleucine 173 and 181–184 (LSSR) each bind ATP.

Belongs to the pantothenate synthetase family. In terms of assembly, homodimer.

It localises to the cytoplasm. The enzyme catalyses (R)-pantoate + beta-alanine + ATP = (R)-pantothenate + AMP + diphosphate + H(+). It functions in the pathway cofactor biosynthesis; (R)-pantothenate biosynthesis; (R)-pantothenate from (R)-pantoate and beta-alanine: step 1/1. Catalyzes the condensation of pantoate with beta-alanine in an ATP-dependent reaction via a pantoyl-adenylate intermediate. The protein is Pantothenate synthetase of Cupriavidus necator (strain ATCC 17699 / DSM 428 / KCTC 22496 / NCIMB 10442 / H16 / Stanier 337) (Ralstonia eutropha).